A 400-amino-acid polypeptide reads, in one-letter code: Enoyl-[acyl-carrier-protein] reductase [NADH] (400 aa).

Residues 48 to 53 (GSSSGY), 74 to 75 (FE), 111 to 112 (DA), and 139 to 140 (LA) contribute to the NAD(+) site. A substrate-binding site is contributed by Tyr225. Catalysis depends on Tyr235, which acts as the Proton donor. Residues Lys244 and 273–275 (VVT) contribute to the NAD(+) site.

It belongs to the TER reductase family. In terms of assembly, monomer.

The enzyme catalyses a 2,3-saturated acyl-[ACP] + NAD(+) = a (2E)-enoyl-[ACP] + NADH + H(+). It functions in the pathway lipid metabolism; fatty acid biosynthesis. Its function is as follows. Involved in the final reduction of the elongation cycle of fatty acid synthesis (FAS II). Catalyzes the reduction of a carbon-carbon double bond in an enoyl moiety that is covalently linked to an acyl carrier protein (ACP). This Shewanella pealeana (strain ATCC 700345 / ANG-SQ1) protein is Enoyl-[acyl-carrier-protein] reductase [NADH].